The chain runs to 66 residues: U1-theraphotoxin-Cg1d 2 (66 aa).

The N-terminal stretch at 1 to 21 (MKMSALFPIFGLPLLFCNSFA) is a signal peptide. Residues 22 to 29 (AELKATGR) constitute a propeptide that is removed on maturation. 3 cysteine pairs are disulfide-bonded: C31–C46, C38–C51, and C45–C58. At P63 the chain carries Proline amide.

It belongs to the neurotoxin 10 (Hwtx-1) family. 46 (Jztx-7/10/12) subfamily. In terms of tissue distribution, expressed by the venom gland.

It localises to the secreted. Probable ion channel inhibitor. In Chilobrachys guangxiensis (Chinese earth tiger tarantula), this protein is U1-theraphotoxin-Cg1d 2.